The chain runs to 546 residues: Chaperonin GroEL 6 (546 aa).

ATP contacts are provided by residues 30-33 (TLGP), K51, 87-91 (DGTTT), G415, and D496.

Belongs to the chaperonin (HSP60) family. In terms of assembly, forms a cylinder of 14 subunits composed of two heptameric rings stacked back-to-back. Interacts with the co-chaperonin GroES.

It localises to the cytoplasm. It catalyses the reaction ATP + H2O + a folded polypeptide = ADP + phosphate + an unfolded polypeptide.. Functionally, together with its co-chaperonin GroES, plays an essential role in assisting protein folding. The GroEL-GroES system forms a nano-cage that allows encapsulation of the non-native substrate proteins and provides a physical environment optimized to promote and accelerate protein folding. The chain is Chaperonin GroEL 6 from Bradyrhizobium diazoefficiens (strain JCM 10833 / BCRC 13528 / IAM 13628 / NBRC 14792 / USDA 110).